We begin with the raw amino-acid sequence, 447 residues long: MESGPCSRPAEPRHCVSGRAGAGLAFPAFPLSAAGAEPGSRIGTVAAVLPAGGCGERMGVRTPKQFCRVLERPLISYTLQAMERVCWIKDIVVTVTGENMEAMRSIIQRYGHKRISLAEAGATRHRSIFNGLKALAEDQPGCELTRPEVVIIHDAVRPFVEEDILLRVVLAAKEHGAAGAIRPLVSTVVSPSADGHLDHSLDRAKHRASEMPQAFHFDVIYEAYQKCSDFDLEFGTECLQLALKYCHRKAKLVEGTPDLWKVTYKQDLCAAEAMIKEKISQEICVVVNTKDEESVGHLLEEVLRNELNCIKVTSTVLDRTSGDIENFIDQCYSFICVNVVSSESRETRKLLSILEESSLPLLYPVVVVLVHCFDFTVVPLAQKMENLVWIRELAKEAKGRNVLLSGVLLNHSQDEQKLQESLVQSAAIIAALVKERNSALVGQLLVA.

It belongs to the IspD/TarI cytidylyltransferase family. IspD subfamily. Homodimer.

The protein resides in the cytoplasm. Its subcellular location is the cytosol. It catalyses the reaction D-ribitol 5-phosphate + CTP + H(+) = CDP-L-ribitol + diphosphate. The enzyme catalyses D-ribose 5-phosphate + CTP + H(+) = CDP-D-ribose + diphosphate. It carries out the reaction D-ribulose 5-phosphate + CTP + H(+) = CDP-D-ribulose + diphosphate. It functions in the pathway protein modification; protein glycosylation. In terms of biological role, cytidylyltransferase required for protein O-linked mannosylation. Catalyzes the formation of CDP-ribitol nucleotide sugar from D-ribitol 5-phosphate. CDP-ribitol is a substrate of FKTN during the biosynthesis of the phosphorylated O-mannosyl trisaccharide (N-acetylgalactosamine-beta-3-N-acetylglucosamine-beta-4-(phosphate-6-)mannose), a carbohydrate structure present in alpha-dystroglycan (DAG1), which is required for binding laminin G-like domain-containing extracellular proteins with high affinity. Shows activity toward other pentose phosphate sugars and mediates formation of CDP-ribulose or CDP-ribose using CTP and ribulose-5-phosphate or ribose-5-phosphate, respectively. Not involved in dolichol production. The protein is D-ribitol-5-phosphate cytidylyltransferase (Crppa) of Rattus norvegicus (Rat).